The sequence spans 420 residues: 3-isopropylmalate dehydratase large subunit (420 aa).

Residues Cys-301, Cys-361, and Cys-364 each coordinate [4Fe-4S] cluster.

This sequence belongs to the aconitase/IPM isomerase family. LeuC type 2 subfamily. In terms of assembly, heterodimer of LeuC and LeuD. The cofactor is [4Fe-4S] cluster.

It carries out the reaction (2R,3S)-3-isopropylmalate = (2S)-2-isopropylmalate. The protein operates within amino-acid biosynthesis; L-leucine biosynthesis; L-leucine from 3-methyl-2-oxobutanoate: step 2/4. In terms of biological role, catalyzes the isomerization between 2-isopropylmalate and 3-isopropylmalate, via the formation of 2-isopropylmaleate. The protein is 3-isopropylmalate dehydratase large subunit of Desulfovibrio desulfuricans (strain ATCC 27774 / DSM 6949 / MB).